The primary structure comprises 351 residues: Protein RecA (351 aa).

64 to 71 (GPESSGKT) contributes to the ATP binding site. The segment at 330-351 (DRFLQNGGPDPDDGDGDATAEM) is disordered. Residues 339-351 (DPDDGDGDATAEM) show a composition bias toward acidic residues.

It belongs to the RecA family.

It is found in the cytoplasm. Functionally, can catalyze the hydrolysis of ATP in the presence of single-stranded DNA, the ATP-dependent uptake of single-stranded DNA by duplex DNA, and the ATP-dependent hybridization of homologous single-stranded DNAs. It interacts with LexA causing its activation and leading to its autocatalytic cleavage. This chain is Protein RecA, found in Rhizobium leguminosarum bv. viciae.